We begin with the raw amino-acid sequence, 264 residues long: Signal peptidase I (264 aa).

Residues 1–18 lie on the Cytoplasmic side of the membrane; that stretch reads MNRDNTKTNKTVKQEFAS. The chain crosses the membrane as a helical span at residues 19–39; that stretch reads FTFVICIALVIRILIMEPFTV. Topologically, residues 40–264 are periplasmic; it reads PTGSMKATIL…IFKNLYNVDE (225 aa). Residues serine 43 and lysine 106 contribute to the active site.

The protein belongs to the peptidase S26 family.

It is found in the cell inner membrane. It catalyses the reaction Cleavage of hydrophobic, N-terminal signal or leader sequences from secreted and periplasmic proteins.. Its function is as follows. Complements E.coli mutants temperature-sensitive for LepB function. This chain is Signal peptidase I (lepB), found in Rickettsia typhi (strain ATCC VR-144 / Wilmington).